Reading from the N-terminus, the 503-residue chain is L-amino-acid oxidase (503 aa).

Positions 1–18 are cleaved as a signal peptide; it reads MNVFFMFSLLFLAALGSC. A disulfide bridge connects residues cysteine 28 and cysteine 191. Residues 61–62, 81–82, arginine 89, and 105–108 contribute to the FAD site; these read MS, EA, and GPMR. Substrate is bound at residue arginine 108. A glycan (N-linked (GlcNAc...) asparagine) is linked at asparagine 190. Substrate is bound at residue histidine 241. Valine 279 is a binding site for FAD. Residues cysteine 349 and cysteine 430 are joined by a disulfide bond. Substrate is bound at residue tyrosine 390. Residues glutamate 475 and 482-487 contribute to the FAD site; that span reads GWIDST. 482-483 provides a ligand contact to substrate; the sequence is GW.

The protein belongs to the flavin monoamine oxidase family. FIG1 subfamily. Homodimer; non-covalently linked. FAD is required as a cofactor. N-glycosylated. The enzymatic activity is not affected by deglycosylation. Expressed by the venom gland.

It localises to the secreted. The catalysed reaction is an L-alpha-amino acid + O2 + H2O = a 2-oxocarboxylate + H2O2 + NH4(+). It catalyses the reaction L-leucine + O2 + H2O = 4-methyl-2-oxopentanoate + H2O2 + NH4(+). It carries out the reaction L-phenylalanine + O2 + H2O = 3-phenylpyruvate + H2O2 + NH4(+). The enzyme catalyses L-methionine + O2 + H2O = 4-methylsulfanyl-2-oxobutanoate + H2O2 + NH4(+). The catalysed reaction is L-isoleucine + O2 + H2O = (S)-3-methyl-2-oxopentanoate + H2O2 + NH4(+). Catalyzes an oxidative deamination of predominantly hydrophobic and aromatic L-amino acids, thus producing hydrogen peroxide that may contribute to the diverse toxic effects of this enzyme. Is highly active on L-Met, L-Leu, L-Phe and L-Ile. Exhibits diverse biological activities, such as antibacterial on both Gram-positive and Gram-negative bacteria and antiparasitic activities, as well as induction of platelet aggregation. Effects of snake L-amino oxidases on platelets are controversial, since they either induce aggregation or inhibit agonist-induced aggregation. These different effects are probably due to different experimental conditions. This protein may also have activities in hemorrhage, hemolysis, edema, and apoptosis. The polypeptide is L-amino-acid oxidase (Bothrops pauloensis (Neuwied's lancehead)).